We begin with the raw amino-acid sequence, 184 residues long: Small ribosomal subunit protein uS4c (184 aa).

An S4 RNA-binding domain is found at M82–N143.

The protein belongs to the universal ribosomal protein uS4 family. In terms of assembly, part of the 30S ribosomal subunit. Contacts protein S5. The interaction surface between S4 and S5 is involved in control of translational fidelity.

The protein localises to the plastid. The protein resides in the chloroplast. In terms of biological role, one of the primary rRNA binding proteins, it binds directly to 16S rRNA where it nucleates assembly of the body of the 30S subunit. Its function is as follows. With S5 and S12 plays an important role in translational accuracy. The protein is Small ribosomal subunit protein uS4c (rps4) of Patersonia fragilis (Short purple-flag).